We begin with the raw amino-acid sequence, 478 residues long: Cytochrome c-552 (478 aa).

The first 27 residues, 1-27, serve as a signal peptide directing secretion; it reads MKKQWTRRSAAAIAMVTTLLLSSHSFA. H91 contributes to the heme c binding site. Residues C119, C122, and K123 each coordinate heme. Heme c-binding residues include C157, C160, H161, C206, C209, and H210. 4 residues coordinate Ca(2+): E212, Y213, K258, and Q260. Residue Y213 coordinates substrate. Substrate is bound at residue H261. Positions 272, 279, 282, 283, 298, 311, 314, 315, and 390 each coordinate heme c.

It belongs to the cytochrome c-552 family. Ca(2+) is required as a cofactor. The cofactor is heme c.

Its subcellular location is the periplasm. It carries out the reaction 6 Fe(III)-[cytochrome c] + NH4(+) + 2 H2O = 6 Fe(II)-[cytochrome c] + nitrite + 8 H(+). It participates in nitrogen metabolism; nitrate reduction (assimilation). In terms of biological role, catalyzes the reduction of nitrite to ammonia, consuming six electrons in the process. This is Cytochrome c-552 from Aliivibrio salmonicida (strain LFI1238) (Vibrio salmonicida (strain LFI1238)).